The chain runs to 163 residues: Succinate dehydrogenase assembly factor 2-A, mitochondrial (163 aa).

A mitochondrion-targeting transit peptide spans 1–23; sequence MLRQLRLTMDISGWIFLPWRRSM.

This sequence belongs to the SDHAF2 family. As to quaternary structure, interacts with the flavoprotein subunit within the SDH catalytic dimer.

It is found in the mitochondrion matrix. Its function is as follows. Plays an essential role in the assembly of succinate dehydrogenase (SDH), an enzyme complex (also referred to as respiratory complex II) that is a component of both the tricarboxylic acid (TCA) cycle and the mitochondrial electron transport chain, and which couples the oxidation of succinate to fumarate with the reduction of ubiquinone (coenzyme Q) to ubiquinol. Required for flavinylation (covalent attachment of FAD) of the flavoprotein subunit of the SDH catalytic dimer. The chain is Succinate dehydrogenase assembly factor 2-A, mitochondrial from Drosophila sechellia (Fruit fly).